Reading from the N-terminus, the 298-residue chain is Protoheme IX farnesyltransferase (298 aa).

9 helical membrane-spanning segments follow: residues Val-16–Pro-36, Ala-45–Leu-65, Val-93–Ile-113, Thr-114–Lys-134, Ile-141–Gly-161, Ser-172–Phe-192, Ile-218–Ser-238, Phe-241–Leu-261, and Ile-277–Val-297.

The protein belongs to the UbiA prenyltransferase family. Protoheme IX farnesyltransferase subfamily.

Its subcellular location is the cell inner membrane. It carries out the reaction heme b + (2E,6E)-farnesyl diphosphate + H2O = Fe(II)-heme o + diphosphate. Its pathway is porphyrin-containing compound metabolism; heme O biosynthesis; heme O from protoheme: step 1/1. In terms of biological role, converts heme B (protoheme IX) to heme O by substitution of the vinyl group on carbon 2 of heme B porphyrin ring with a hydroxyethyl farnesyl side group. The polypeptide is Protoheme IX farnesyltransferase (Xanthomonas axonopodis pv. citri (strain 306)).